The sequence spans 155 residues: Endoribonuclease YbeY (155 aa).

3 residues coordinate Zn(2+): His-114, His-118, and His-124.

It belongs to the endoribonuclease YbeY family. Zn(2+) is required as a cofactor.

The protein localises to the cytoplasm. In terms of biological role, single strand-specific metallo-endoribonuclease involved in late-stage 70S ribosome quality control and in maturation of the 3' terminus of the 16S rRNA. The sequence is that of Endoribonuclease YbeY from Escherichia coli O17:K52:H18 (strain UMN026 / ExPEC).